The chain runs to 116 residues: Large ribosomal subunit protein bL20 (116 aa).

Belongs to the bacterial ribosomal protein bL20 family.

Binds directly to 23S ribosomal RNA and is necessary for the in vitro assembly process of the 50S ribosomal subunit. It is not involved in the protein synthesizing functions of that subunit. This chain is Large ribosomal subunit protein bL20, found in Fusobacterium nucleatum subsp. nucleatum (strain ATCC 25586 / DSM 15643 / BCRC 10681 / CIP 101130 / JCM 8532 / KCTC 2640 / LMG 13131 / VPI 4355).